A 566-amino-acid polypeptide reads, in one-letter code: Protein kintoun (566 aa).

Disordered regions lie at residues 183–298 (KYKG…TAPQ), 399–467 (EEEE…AETG), and 493–552 (QLEE…ESRI). Positions 208-290 (PQQTTGPQQP…HQPTDPQQTT (83 aa)) are enriched in low complexity. Over residues 399-424 (EEEERRAEEEESRKGGDEDGELHPDC) the composition is skewed to basic and acidic residues. Residues 440 to 467 (TPAADTHTPAADTHTPAADTHTPAAETG) show a composition bias toward low complexity. Basic and acidic residues predominate over residues 535-550 (DPAHTDPAHTDPEMES).

The protein belongs to the PIH1 family. Kintoun subfamily.

The protein resides in the cytoplasm. It is found in the dynein axonemal particle. Functionally, required for cytoplasmic pre-assembly of axonemal dyneins, thereby playing a central role in motility in cilia and flagella. Involved in pre-assembly of dynein arm complexes in the cytoplasm before intraflagellar transport loads them for the ciliary compartment. This is Protein kintoun from Danio rerio (Zebrafish).